A 713-amino-acid polypeptide reads, in one-letter code: Oligopeptidase PhomG (713 aa).

His461 contacts Zn(2+). Glu462 is a catalytic residue. The Zn(2+) site is built by His465 and His468.

Belongs to the peptidase M3 family. As to quaternary structure, monomer. Zn(2+) serves as cofactor.

It participates in mycotoxin biosynthesis. Its function is as follows. Oligopeptidase; part of the gene cluster that mediates the biosynthesis of the phomopsins, a group of hexapeptide mycotoxins which infects lupins and causes lupinosis disease in livestock. Within the pathway, phomG and phomG' are probably involved in the processing of the phomA and phomA' precursors. The pathway starts with the processing of the precursor phomA by several endopeptidases including kexin proteases as well as the cluster-specific S41 family peptidase phomP1 and the oligopeptidase phomG to produce 10 identical copies of the hexapeptide Tyr-Val-Ile-Pro-Ile-Asp. After being excised from the precursor peptide, the core peptides are cyclized and modified post-translationally by enzymes encoded within the gene cluster. The timing and order of proteolysis of the phomA precursor and PTMs are still unknown. Two tyrosinase-like enzymes, phomQ1 and phomQ2, catalyze the chlorination and hydroxylation of Tyr, respectively. PhomYb, is proposed to be involved in the construction of the macrocyclic structure. The other 4 ustYa family proteins may be involved in PTMs that generate the unique structure of phomopsin A. PhomYa is required for the hydroxylation of C-beta of Tyr. PhomYc, phomYd, and phomYe are responsible for the biosynthesis of 2,3-dehydroisoleucine (dIle), 2,3-dehydroaspartic acid (dAsp), and 3,4-dehydroproline (dPro), respectively. While dIle formation by phomYc is indispensable for the installation of dAsp by phomYd, the order of the other PTMs have not been elucidated yet. Most of the biosynthetic enzymes likely have broad substrate specificity, and thus, there might be a metabolic grid from a precursor to phomopsin A. The enzyme(s) responsible for the biosynthesis of 3,4-dehydrovaline (dVal) have also not been identified yet. Finally, phomM acts as an S-adenosylmethionine-dependent alpha-N-methyltransferase that catalyzes two successive N-methylation reactions, converting N-desmethyl-phomopsin A to phomopsin A and phomopsin A further to an N,N-dimethylated congener called phomopsin E. In Diaporthe leptostromiformis (Lupinosis disease fungus), this protein is Oligopeptidase PhomG.